The chain runs to 554 residues: Guanine nucleotide-binding protein alpha-2 subunit (554 aa).

2 disordered regions span residues 1–139 (MGLC…NNSN) and 157–183 (VNGN…THSG). Residue G2 is the site of N-myristoyl glycine attachment. A lipid anchor (S-palmitoyl cysteine) is attached at C4. 2 stretches are compositionally biased toward basic and acidic residues: residues 7-17 (KDSRESTHDGG) and 28-43 (ANRR…DKKQ). The segment covering 52-66 (GSIVNAASNINNSSS) has biased composition (low complexity). The segment covering 67–85 (GKTKISTVSEDGTVSNGVG) has biased composition (polar residues). Residues 91–139 (DNANNKNNGNNNNSNNNDNNNNNNNNIGNNINGNNNNDSENIHDSNNSN) are compositionally biased toward low complexity. The G-alpha domain occupies 228 to 554 (NALKVLLLGS…ENSLKDSGVL (327 aa)). The tract at residues 231-244 (KVLLLGSGESGKST) is G1 motif. GTP contacts are provided by E239, S240, G241, K242, S243, T244, D351, I376, T382, G405, N471, K472, D474, and A526. Residue S243 coordinates Mg(2+). Residues 374–382 (DVIRTRKKT) are G2 motif. Residue T382 participates in Mg(2+) binding. Positions 398 to 407 (LHFFDVGGQR) are G3 motif. Residues 467 to 474 (VLFLNKID) are G4 motif. Residues 524-529 (TQATDT) are G5 motif.

Belongs to the G-alpha family. As to quaternary structure, g proteins are composed of 3 units; alpha, beta and gamma. The alpha chain contains the guanine nucleotide binding site. It depends on Mg(2+) as a cofactor.

Guanine nucleotide-binding proteins (G proteins) are involved as modulators or transducers in various transmembrane signaling systems. This protein may be involved in the determination of the cAMP level according to nutritional conditions, most probably as a regulator of adenylyl cyclase. This is Guanine nucleotide-binding protein alpha-2 subunit (GPA2) from Kluyveromyces lactis (strain ATCC 8585 / CBS 2359 / DSM 70799 / NBRC 1267 / NRRL Y-1140 / WM37) (Yeast).